The sequence spans 96 residues: UPF0235 protein YggU (96 aa).

This sequence belongs to the UPF0235 family.

In Salmonella typhi, this protein is UPF0235 protein YggU.